We begin with the raw amino-acid sequence, 1953 residues long: Putative surface-exposed virulence protein BigA (1953 aa).

A signal peptide spans 1–27 (MNPMQKKKLISIAIALTLQSYYIPAIA). Disordered stretches follow at residues 31–50 (NDDE…EKRA), 88–258 (GGGD…TFSN), and 1496–1517 (TTAP…PQQL). Residues 101–103 (PDN) form a 1; truncated repeat. A 15 X 11 AA tandem repeats region spans residues 101–252 (PDNGGDVTPP…DDDDTPPDDS (152 aa)). The stretch at 104 to 113 (GGDVTPPDDG) is one 2; truncated repeat. One copy of the 3; truncated repeat lies at 114-122 (GNVTPPDDG). 11 repeat units span residues 123-133 (GNVTPPDDGGD), 134-144 (DNVTPPDDSGD), 145-155 (DDVAPPDDSGD), 156-166 (DDVTPPDDSGD), 167-177 (DDVTPPDDSGD), 178-188 (GDVTPPDDSGD), 189-199 (DDVTPPDDSGD), 200-210 (DDVTPPDDSGD), 211-221 (DDVTPPDDSGD), 222-232 (DDVTPPDDSGD), and 233-243 (DDVTPPDDSGD). 2 stretches are compositionally biased toward acidic residues: residues 141 to 177 (DSGD…DSGD) and 185 to 249 (DSGD…DTPP). A 15; truncated repeat occupies 244-252 (DDDTPPDDS). In terms of domain architecture, Autotransporter spans 1649-1952 (SGAQATTVFR…GFMLNVKKTF (304 aa)).

This chain is Putative surface-exposed virulence protein BigA (bigA), found in Salmonella typhimurium (strain LT2 / SGSC1412 / ATCC 700720).